Here is a 179-residue protein sequence, read N- to C-terminus: Acireductone dioxygenase (179 aa).

4 residues coordinate Fe(2+): His-88, His-90, Glu-94, and His-133. Ni(2+) is bound by residues His-88, His-90, Glu-94, and His-133.

This sequence belongs to the acireductone dioxygenase (ARD) family. In terms of assembly, monomer. Interacts with MMP14. Fe(2+) serves as cofactor. It depends on Ni(2+) as a cofactor.

The protein resides in the cytoplasm. The protein localises to the nucleus. It is found in the cell membrane. The catalysed reaction is 1,2-dihydroxy-5-(methylsulfanyl)pent-1-en-3-one + O2 = 4-methylsulfanyl-2-oxobutanoate + formate + 2 H(+). It catalyses the reaction 1,2-dihydroxy-5-(methylsulfanyl)pent-1-en-3-one + O2 = 3-(methylsulfanyl)propanoate + CO + formate + 2 H(+). Its pathway is amino-acid biosynthesis; L-methionine biosynthesis via salvage pathway; L-methionine from S-methyl-5-thio-alpha-D-ribose 1-phosphate: step 5/6. Its function is as follows. Catalyzes 2 different reactions between oxygen and the acireductone 1,2-dihydroxy-3-keto-5-methylthiopentene (DHK-MTPene) depending upon the metal bound in the active site. Fe-containing acireductone dioxygenase (Fe-ARD) produces formate and 2-keto-4-methylthiobutyrate (KMTB), the alpha-ketoacid precursor of methionine in the methionine recycle pathway. Ni-containing acireductone dioxygenase (Ni-ARD) produces methylthiopropionate, carbon monoxide and formate, and does not lie on the methionine recycle pathway. Also down-regulates cell migration mediated by MMP14. This chain is Acireductone dioxygenase, found in Macaca mulatta (Rhesus macaque).